The sequence spans 131 residues: Interleukin-13 (131 aa).

A signal peptide spans Met1–Ala18. Asn42, Asn53, Asn76, and Asn121 each carry an N-linked (GlcNAc...) asparagine glycan. Cystine bridges form between Cys52-Cys80 and Cys68-Cys94.

The protein belongs to the IL-4/IL-13 family. As to quaternary structure, interacts with IL13RA2.

The protein localises to the secreted. In terms of biological role, cytokine that plays important roles in allergic inflammation and immune response to parasite infection. Synergizes with IL2 in regulating interferon-gamma synthesis. Stimulates B-cell proliferation, and activation of eosinophils, basophils, and mast cells. Plays an important role in controlling IL33 activity by modulating the production of transmembrane and soluble forms of interleukin-1 receptor-like 1/IL1RL1. Displays the capacity to antagonize Th1-driven proinflammatory immune response and downregulates synthesis of many proinflammatory cytokines including IL1, IL6, IL10, IL12 and TNF-alpha through a mechanism that partially involves suppression of NF-kappa-B. Also functions on nonhematopoietic cells, including endothelial cells where it induces vascular cell adhesion protein 1/VCAM1, which is important in the recruitment of eosinophils. Exerts its biological effects through its receptors which comprises the IL4R chain and the IL13RA1 chain, to activate JAK1 and TYK2, leading to the activation of STAT6. Aside from IL13RA1, another receptor IL13RA2 acts as a high affinity decoy for IL13 and mediates internalization and depletion of extracellular IL13. In Rattus norvegicus (Rat), this protein is Interleukin-13 (Il13).